A 409-amino-acid polypeptide reads, in one-letter code: Glycogenin (409 aa).

UDP is bound by residues Leu-8, Tyr-14, and Arg-80. Residues Leu-8, Tyr-14, Arg-80, Lys-89, Asp-105, Asp-107, Asn-140, Ser-141, Asp-169, Asp-172, and Gln-173 each coordinate UDP-alpha-D-glucose. Asp-105 and Asp-107 together coordinate UDP. Mn(2+) is bound by residues Asp-105 and Asp-107. A glycan (O-linked (Glc...) tyrosine) is linked at Tyr-212. Residues His-229, Gly-232, and Lys-235 each contribute to the UDP site. Mn(2+) is bound at residue His-229. UDP-alpha-D-glucose-binding residues include Gly-232 and Lys-235. Positions 283–303 are disordered; the sequence is RIEEDSHETEEKVDEEVSISE.

Belongs to the glycosyltransferase 8 family. Glycogenin subfamily. Requires Mn(2+) as cofactor.

The protein localises to the cytoplasm. It localises to the vacuole. It catalyses the reaction L-tyrosyl-[glycogenin] + UDP-alpha-D-glucose = alpha-D-glucosyl-L-tyrosyl-[glycogenin] + UDP + H(+). It carries out the reaction [1,4-alpha-D-glucosyl](n)-L-tyrosyl-[glycogenin] + UDP-alpha-D-glucose = [1,4-alpha-D-glucosyl](n+1)-L-tyrosyl-[glycogenin] + UDP + H(+). Functionally, glycogenin participates in the glycogen biosynthetic process along with glycogen synthase and glycogen branching enzyme. It catalyzes the formation of a short alpha (1,4)-glucosyl chain covalently attached via a glucose 1-O-tyrosyl linkage to internal tyrosine residues and these chains act as primers for the elongation reaction catalyzed by glycogen synthase. This chain is Glycogenin, found in Komagataella phaffii (strain GS115 / ATCC 20864) (Yeast).